A 342-amino-acid polypeptide reads, in one-letter code: Aldo-keto reductase pigE (342 aa).

Positions 1–27 (MGSISPKTRFPIVLGAGLIGSPGLFEG) are cleaved as a signal peptide. Asp-52 contacts NADP(+). The active-site Proton donor is Tyr-57. Residues Gln-182 and Arg-236 each coordinate NADP(+). The N-linked (GlcNAc...) asparagine glycan is linked to Asn-271.

Belongs to the aldo/keto reductase family. Aldo/keto reductase 2 subfamily.

It participates in secondary metabolite biosynthesis. Aldo-keto reductase; part of the gene cluster that mediates the biosynthesis of azaphilone pigments (MonAzPs), a complex mixture of compounds with a common azaphilone skeleton very widely used as food colorants. Within the pathway, pigE is involved in the dehydration of the C-11 alcohol followed by the reduction of the C6(7) double bond which increases the electrophilicity of the C-5 ketone of the resulting acyl benzopyran and allows the intramolecular Knoevenagel aldol condensation with the C-20 enol of the side chain to yield the characteristic linear tricyclic carbon skeletons of the yellow pigments. The first step of the pathway is performed by the nrPKS pigA that forms the hexaketide precursor from successive condensations of five malonyl-CoA units, with a simple acetyl-CoA starter unit. The role of esterase pigG is not clear, but it may play at most a supplementary role in the formation of the benzaldehyde produced by the pigA nrPKS. This very reactive benzaldehyde is intercepted by the pigC ketoreductase that to provide the first stable enzyme-free MonAzPs intermediate, 6-(4-hydroxy-2-oxopentyl)-3-methyl-2,4-dioxocyclohexane carbaldehyde, also known as M7PKS-1. The FAD-dependent monooxygenase pigN hydroxylates M7PKS-1 at C-4, which triggers the formation of the pyran ring. PigJ, pigK and pigD are involved in the acetylation of the pyran ring. PigJ and pigK form the two subunits of a dedicated fungal FAS that produces the side chain fatty acyl moiety of MonAzPs and pigD transfers the fatty acyl chain to the C-4 alcohol. PigM and pigO are involved in the elimination of the omega-1 alcohol. PigM acts as an O-acetyltransferase that synthesizes the putative O-11 acetyl intermediate whereas pigO eliminates acetic acid to yield an intermediate with a C10(11) double bond. The dehydration of the C-11 alcohol followed by the reduction of the C6(7) double bond by the NAD(P)H-dependent oxidoreductase pigE increases the electrophilicity of the C-5 ketone of the resulting acyl benzopyran. This in turn sets up the C-5 ketone for an intramolecular Knoevenagel aldol condensation with the C-20 enol of the side chain. This condensation affords the characteristic linear tricyclic carbon skeletons of the yellow pigments that serve as the common precursors for the classical yellow pigments monascin and ankaflavin, orange pigments rubopunctatin and monascorubrin, and red pigments ribropunctamine and monascorubramine. The FAD-dependent oxidoreductase pigF is especially invoved in the biosynthesis of orange and red pigments via desaturation of C6(7). This Monascus ruber (Mold) protein is Aldo-keto reductase pigE.